The chain runs to 395 residues: Proteinase-activated receptor 4 (395 aa).

A signal peptide spans 1-16 (MCWPLLYPLMLGFSIS). Positions 17-58 (PAECQTPSIYDDVESTREGQEASLRPTVELNESKSPDKPNPR) are cleaved as a propeptide — removed for receptor activation. The interval 46–66 (LNESKSPDKPNPRGFPGKPCA) is disordered. Residues 47-56 (NESKSPDKPN) are compositionally biased toward basic and acidic residues. The Extracellular portion of the chain corresponds to 59 to 93 (GFPGKPCANNSDTLELPASSEALLLGWVPTRLVPA). N-linked (GlcNAc...) asparagine glycosylation is present at N67. A helical membrane pass occupies residues 94 to 114 (IYGLVVVVGLPANGLALWVLA). The Cytoplasmic segment spans residues 115-119 (TRVPR). Residues 120 to 140 (LPSTILLMNLAVADLLLALVL) traverse the membrane as a helical segment. At 141–161 (PPRLVYHLRGQRWPFGEAACR) the chain is on the extracellular side. C160 and C239 are oxidised to a cystine. A helical transmembrane segment spans residues 162–182 (VATAALYGHMYGSVLLLAAVS). Topologically, residues 183–203 (LDRYLALVHSLRARALRGQRL) are cytoplasmic. A helical transmembrane segment spans residues 204–224 (TTILCLVAWLSAATLVLPLTF). The Extracellular portion of the chain corresponds to 225–254 (HRQTFLLAGSDRMLCHDALPLAEQTSHWRP). The chain crosses the membrane as a helical span at residues 255–275 (AFICLAVLGCFVPLLAMVLCY). Topologically, residues 276–295 (GATLRALAANGQRYSHAVRL) are cytoplasmic. The helical transmembrane segment at 296–316 (TALVLFSAVAAFTPSNVLLVL) threads the bilayer. The Extracellular portion of the chain corresponds to 317–330 (HYSNPSPEAWGNLY). The helical transmembrane segment at 331–354 (GAYVPSLALSTLNSCVDPFIYYYV) threads the bilayer. The Cytoplasmic segment spans residues 355–395 (SHEFREKVRAMLCRQLKASSSSQASREAGSRGTAICSSTLL).

This sequence belongs to the G-protein coupled receptor 1 family. In terms of processing, a proteolytic cleavage generates a new N-terminus that functions as a tethered ligand.

Its subcellular location is the cell membrane. Receptor for activated thrombin or trypsin coupled to G proteins that stimulate phosphoinositide hydrolysis. May play a role in platelets activation. The sequence is that of Proteinase-activated receptor 4 (F2rl3) from Rattus norvegicus (Rat).